A 129-amino-acid polypeptide reads, in one-letter code: V-type proton ATPase subunit F 2 (129 aa).

This sequence belongs to the V-ATPase F subunit family. V-ATPase is a heteromultimeric enzyme made up of two complexes: the ATP-hydrolytic V1 complex and the proton translocation V0 complex. The V1 complex consists of three catalytic AB heterodimers that form a heterohexamer, three peripheral stalks each consisting of EG heterodimers, one central rotor including subunits D and F, and the regulatory subunits C and H. The proton translocation complex V0 consists of the proton transport subunit a, a ring of proteolipid subunits c9c'', rotary subunit d, subunits e and f, and the accessory subunits VhaAC45 and ATP6AP2.

Functionally, subunit of the V1 complex of vacuolar(H+)-ATPase (V-ATPase), a multisubunit enzyme composed of a peripheral complex (V1) that hydrolyzes ATP and a membrane integral complex (V0) that translocates protons. V-ATPase is responsible for acidifying and maintaining the pH of intracellular compartments and in some cell types, is targeted to the plasma membrane, where it is responsible for acidifying the extracellular environment. The polypeptide is V-type proton ATPase subunit F 2 (Vha14-2) (Drosophila melanogaster (Fruit fly)).